The chain runs to 502 residues: Probable RNA exonuclease C9B6.11c (502 aa).

The interval 338–379 (SELEEKNASTKTENDSNEDDKEECQSSSTSSVPESTASTPKK) is disordered. Basic and acidic residues predominate over residues 341-351 (EEKNASTKTEN). A compositionally biased stretch (low complexity) spans 363-376 (SSSTSSVPESTAST).

Belongs to the CCR4/nocturin family.

It is found in the cytoplasm. Its subcellular location is the nucleus. This Schizosaccharomyces pombe (strain 972 / ATCC 24843) (Fission yeast) protein is Probable RNA exonuclease C9B6.11c.